Consider the following 733-residue polypeptide: Phosphoribosylformylglycinamidine synthase subunit PurL (733 aa).

Residue histidine 41 is part of the active site. Positions 44 and 83 each coordinate ATP. Residue glutamate 85 participates in Mg(2+) binding. Substrate-binding positions include 86-89 (SHNH) and arginine 108. The active-site Proton acceptor is histidine 87. Aspartate 109 is a Mg(2+) binding site. Residues 212-232 (GASFASQELSEESEEKRPSVQ) form a disordered region. Glutamine 232 is a binding site for substrate. Residue aspartate 260 coordinates Mg(2+). 304 to 306 (ESQ) is a binding site for substrate. ATP-binding residues include aspartate 488 and glycine 525. Asparagine 526 serves as a coordination point for Mg(2+). Serine 528 contributes to the substrate binding site.

This sequence belongs to the FGAMS family. In terms of assembly, monomer. Part of the FGAM synthase complex composed of 1 PurL, 1 PurQ and 2 PurS subunits.

Its subcellular location is the cytoplasm. The catalysed reaction is N(2)-formyl-N(1)-(5-phospho-beta-D-ribosyl)glycinamide + L-glutamine + ATP + H2O = 2-formamido-N(1)-(5-O-phospho-beta-D-ribosyl)acetamidine + L-glutamate + ADP + phosphate + H(+). It functions in the pathway purine metabolism; IMP biosynthesis via de novo pathway; 5-amino-1-(5-phospho-D-ribosyl)imidazole from N(2)-formyl-N(1)-(5-phospho-D-ribosyl)glycinamide: step 1/2. Part of the phosphoribosylformylglycinamidine synthase complex involved in the purines biosynthetic pathway. Catalyzes the ATP-dependent conversion of formylglycinamide ribonucleotide (FGAR) and glutamine to yield formylglycinamidine ribonucleotide (FGAM) and glutamate. The FGAM synthase complex is composed of three subunits. PurQ produces an ammonia molecule by converting glutamine to glutamate. PurL transfers the ammonia molecule to FGAR to form FGAM in an ATP-dependent manner. PurS interacts with PurQ and PurL and is thought to assist in the transfer of the ammonia molecule from PurQ to PurL. In Thermoanaerobacter sp. (strain X514), this protein is Phosphoribosylformylglycinamidine synthase subunit PurL.